A 147-amino-acid polypeptide reads, in one-letter code: Probable disulfide formation protein (147 aa).

Residues 9–28 (NYSLYFAWLTALIATLGSLY) form a helical membrane-spanning segment. A disulfide bridge links Cys38 with Cys41. A run of 2 helical transmembrane segments spans residues 43–62 (YQRVCIYPLTILLGIAAYRT) and 69–86 (YALPLVVLGFLFSVYQYL). A disulfide bridge connects residues Cys99 and Cys106. A helical transmembrane segment spans residues 115–138 (GFITLPFLGMLATLIMSFFLIMAF).

The protein belongs to the DsbB family. BdbC subfamily.

Its subcellular location is the cell inner membrane. Its function is as follows. Required for disulfide bond formation in some proteins. This Coxiella burnetii (strain CbuG_Q212) (Coxiella burnetii (strain Q212)) protein is Probable disulfide formation protein.